A 426-amino-acid chain; its full sequence is Serine--tRNA ligase (426 aa).

L-serine is bound at residue 233–235; sequence TAE. 264–266 provides a ligand contact to ATP; the sequence is RSE. Glutamate 287 provides a ligand contact to L-serine. 351–354 contributes to the ATP binding site; the sequence is EISS. Position 387 (serine 387) interacts with L-serine.

Belongs to the class-II aminoacyl-tRNA synthetase family. Type-1 seryl-tRNA synthetase subfamily. In terms of assembly, homodimer. The tRNA molecule binds across the dimer.

It localises to the cytoplasm. It carries out the reaction tRNA(Ser) + L-serine + ATP = L-seryl-tRNA(Ser) + AMP + diphosphate + H(+). The enzyme catalyses tRNA(Sec) + L-serine + ATP = L-seryl-tRNA(Sec) + AMP + diphosphate + H(+). The protein operates within aminoacyl-tRNA biosynthesis; selenocysteinyl-tRNA(Sec) biosynthesis; L-seryl-tRNA(Sec) from L-serine and tRNA(Sec): step 1/1. Its function is as follows. Catalyzes the attachment of serine to tRNA(Ser). Is also able to aminoacylate tRNA(Sec) with serine, to form the misacylated tRNA L-seryl-tRNA(Sec), which will be further converted into selenocysteinyl-tRNA(Sec). The chain is Serine--tRNA ligase from Clostridium botulinum (strain Okra / Type B1).